A 234-amino-acid polypeptide reads, in one-letter code: UPF0758 protein STH371 (234 aa).

The region spanning 110–232 (DLCNPRAVFE…YTSFRERGLL (123 aa)) is the MPN domain. Residues His181, His183, and Asp194 each coordinate Zn(2+). The JAMM motif signature appears at 181-194 (HNHPSGDPTPSRED).

This sequence belongs to the UPF0758 family.

In Symbiobacterium thermophilum (strain DSM 24528 / JCM 14929 / IAM 14863 / T), this protein is UPF0758 protein STH371.